A 156-amino-acid polypeptide reads, in one-letter code: Small ribosomal subunit protein uS7 (156 aa).

Belongs to the universal ribosomal protein uS7 family. Part of the 30S ribosomal subunit. Contacts proteins S9 and S11.

Functionally, one of the primary rRNA binding proteins, it binds directly to 16S rRNA where it nucleates assembly of the head domain of the 30S subunit. Is located at the subunit interface close to the decoding center, probably blocks exit of the E-site tRNA. The polypeptide is Small ribosomal subunit protein uS7 (Methylibium petroleiphilum (strain ATCC BAA-1232 / LMG 22953 / PM1)).